A 60-amino-acid chain; its full sequence is MTQVVVGQNEAIESALRRFKRQVAKAGIYADIKKHQFFETPQEKRKRKAVARRRQRTRRR.

Residues 39–60 (ETPQEKRKRKAVARRRQRTRRR) form a disordered region. Over residues 44–60 (KRKRKAVARRRQRTRRR) the composition is skewed to basic residues.

This sequence belongs to the bacterial ribosomal protein bS21 family.

This Microcystis aeruginosa (strain NIES-843 / IAM M-2473) protein is Small ribosomal subunit protein bS21.